The following is a 321-amino-acid chain: Proline-rich protein 2 (321 aa).

An N-terminal signal peptide occupies residues 1-26; the sequence is MRILPKSGGGALCLLFVFALCSVAHS. Repeat copies occupy residues 168–172, 173–176, 177–181, 185–189, 190–194, 198–202, 207–211, 212–217, 218–223, 225–229, 234–238, 240–244, 245–251, 252–256, 262–266, 267–271, 272–276, 277–281, 282–286, 288–292, 293–297, 298–302, 303–307, and 315–319. The 24 X 5 AA approximate repeats stretch occupies residues 168 to 319; it reads PPLNLPPLTF…KFGKWPPFPS (152 aa).

Belongs to the plant proline-rich protein superfamily. Mostly expressed in aerial organs, particularly in expanding leaves, stems, flowers, and siliques.

It localises to the secreted. The protein resides in the cell wall. This chain is Proline-rich protein 2 (PRP2), found in Arabidopsis thaliana (Mouse-ear cress).